The sequence spans 150 residues: MKLSDLRPNPGANKRRKRVGRGPGSGHGKTATRGHKGQKSRSGGLKDPRRFEGGRSTTLMRLPKRGMQGQVPGEIKRPRYQGVNLKDLARFEGEVTPELLVRAGLLKKGYRLKILGEGEAKPLKVVAHAFSKSALEKLKAAGGEPVLLEA.

A disordered region spans residues 1–60 (MKLSDLRPNPGANKRRKRVGRGPGSGHGKTATRGHKGQKSRSGGLKDPRRFEGGRSTTLM). Residues 30–39 (TATRGHKGQK) show a composition bias toward basic residues. Residues 44–53 (GLKDPRRFEG) show a composition bias toward basic and acidic residues.

Belongs to the universal ribosomal protein uL15 family. In terms of assembly, part of the 50S ribosomal subunit.

Binds to the 23S rRNA. The protein is Large ribosomal subunit protein uL15 of Thermus thermophilus (strain ATCC BAA-163 / DSM 7039 / HB27).